The sequence spans 188 residues: Elongation factor P (188 aa).

Belongs to the elongation factor P family.

Its subcellular location is the cytoplasm. Its pathway is protein biosynthesis; polypeptide chain elongation. Involved in peptide bond synthesis. Stimulates efficient translation and peptide-bond synthesis on native or reconstituted 70S ribosomes in vitro. Probably functions indirectly by altering the affinity of the ribosome for aminoacyl-tRNA, thus increasing their reactivity as acceptors for peptidyl transferase. This chain is Elongation factor P, found in Natranaerobius thermophilus (strain ATCC BAA-1301 / DSM 18059 / JW/NM-WN-LF).